Consider the following 41-residue polypeptide: Photosystem I reaction center subunit IX (41 aa).

A helical membrane pass occupies residues 7 to 27 (YLSTAPVIALAWMSFTAGLLI).

The protein belongs to the PsaJ family.

It is found in the plastid. It localises to the chloroplast thylakoid membrane. In terms of biological role, may help in the organization of the PsaE and PsaF subunits. The sequence is that of Photosystem I reaction center subunit IX from Tupiella akineta (Green alga).